A 284-amino-acid polypeptide reads, in one-letter code: Acetylglutamate kinase (284 aa).

Residues 64 to 65, Arg86, and Asn177 each bind substrate; that span reads GG.

Belongs to the acetylglutamate kinase family. ArgB subfamily.

It is found in the cytoplasm. The catalysed reaction is N-acetyl-L-glutamate + ATP = N-acetyl-L-glutamyl 5-phosphate + ADP. Its pathway is amino-acid biosynthesis; L-arginine biosynthesis; N(2)-acetyl-L-ornithine from L-glutamate: step 2/4. In terms of biological role, catalyzes the ATP-dependent phosphorylation of N-acetyl-L-glutamate. In Haemophilus ducreyi (strain 35000HP / ATCC 700724), this protein is Acetylglutamate kinase.